The sequence spans 158 residues: C-type lectin lectoxin-Thr1 (158 aa).

A signal peptide spans 1–23 (MGRFIFATLGLLLVAFSINGAKG). 3 disulfide bridges follow: cysteine 26–cysteine 37, cysteine 54–cysteine 154, and cysteine 129–cysteine 146. The region spanning 33–155 (LKGFCYKVFN…CASTRAYLCK (123 aa)) is the C-type lectin domain. Positions 119 to 121 (EPN) match the Mannose-binding motif. Residues glutamate 127, asparagine 142, and aspartate 143 each coordinate Ca(2+).

It belongs to the true venom lectin family. In terms of tissue distribution, expressed by the venom gland.

The protein localises to the secreted. Its function is as follows. Mannose-binding lectin which recognizes specific carbohydrate structures and agglutinates a variety of animal cells by binding to cell-surface glycoproteins and glycolipids. May be a calcium-dependent lectin. The sequence is that of C-type lectin lectoxin-Thr1 from Thrasops jacksonii (Jackson's black tree snake).